The primary structure comprises 209 residues: Ribosomal RNA large subunit methyltransferase E (209 aa).

S-adenosyl-L-methionine-binding residues include Gly-63, Trp-65, Asp-83, Asp-99, and Asp-124. The active-site Proton acceptor is the Lys-164.

The protein belongs to the class I-like SAM-binding methyltransferase superfamily. RNA methyltransferase RlmE family.

It is found in the cytoplasm. It carries out the reaction uridine(2552) in 23S rRNA + S-adenosyl-L-methionine = 2'-O-methyluridine(2552) in 23S rRNA + S-adenosyl-L-homocysteine + H(+). Functionally, specifically methylates the uridine in position 2552 of 23S rRNA at the 2'-O position of the ribose in the fully assembled 50S ribosomal subunit. In Vibrio parahaemolyticus serotype O3:K6 (strain RIMD 2210633), this protein is Ribosomal RNA large subunit methyltransferase E.